The primary structure comprises 295 residues: Sulfotransferase 1A1 (295 aa).

48–53 (KSGTTW) contacts 3'-phosphoadenylyl sulfate. Position 106–108 (106–108 (KTH)) interacts with substrate. H108 (proton acceptor) is an active-site residue. 3'-phosphoadenylyl sulfate is bound by residues R130, S138, Y193, 227–232 (TSFKEM), and 255–259 (FMRKG). Phosphoserine is present on S138.

It belongs to the sulfotransferase 1 family. Homodimer. As to expression, ubiquitously expressed in canine tissues with highest expression in male and female liver.

It localises to the cytoplasm. The catalysed reaction is a phenol + 3'-phosphoadenylyl sulfate = an aryl sulfate + adenosine 3',5'-bisphosphate + H(+). It catalyses the reaction 17beta-estradiol + 3'-phosphoadenylyl sulfate = 17beta-estradiol 3-sulfate + adenosine 3',5'-bisphosphate + H(+). It carries out the reaction 4-ethylphenol + 3'-phosphoadenylyl sulfate = 4-ethylphenyl sulfate + adenosine 3',5'-bisphosphate + H(+). The enzyme catalyses 4-nitrophenol + 3'-phosphoadenylyl sulfate = 4-nitrophenyl sulfate + adenosine 3',5'-bisphosphate. The catalysed reaction is dopamine + 3'-phosphoadenylyl sulfate = dopamine 3-O-sulfate + adenosine 3',5'-bisphosphate + H(+). It catalyses the reaction dopamine + 3'-phosphoadenylyl sulfate = dopamine 4-O-sulfate + adenosine 3',5'-bisphosphate + H(+). It carries out the reaction 3,3',5-triiodo-L-thyronine + 3'-phosphoadenylyl sulfate = 3,3',5-triiodo-L-thyronine sulfate + adenosine 3',5'-bisphosphate + H(+). The enzyme catalyses 3,3',5'-triiodo-L-thyronine + 3'-phosphoadenylyl sulfate = 3,3',5'-triiodo-L-thyronine sulfate + adenosine 3',5'-bisphosphate + H(+). The catalysed reaction is 3,3'-diiodo-L-thyronine + 3'-phosphoadenylyl sulfate = 3,3'-diiodo-L-thyronine sulfate + adenosine 3',5'-bisphosphate + H(+). It catalyses the reaction L-thyroxine + 3'-phosphoadenylyl sulfate = L-thyroxine sulfate + adenosine 3',5'-bisphosphate + H(+). In terms of biological role, sulfotransferase that utilizes 3'-phospho-5'-adenylyl sulfate (PAPS) as sulfonate donor to catalyze the sulfate conjugation of a wide variety of acceptor molecules bearing a hydroxyl or an amine group. Sulfonation increases the water solubility of most compounds, and therefore their renal excretion, but it can also result in bioactivation to form active metabolites. Displays broad substrate specificity for small phenolic compounds. Plays an important role in the sulfonation of endogenous molecules such as steroid hormones. Mediates also the metabolic activation of carcinogenic N-hydroxyarylamines leading to highly reactive intermediates capable of forming DNA adducts, potentially resulting in mutagenesis. May play a role in gut microbiota-host metabolic interaction. O-sulfonates 4-ethylphenol (4-EP), a dietary tyrosine-derived metabolite produced by gut bacteria. The product 4-EPS crosses the blood-brain barrier and may negatively regulate oligodendrocyte maturation and myelination, affecting the functional connectivity of different brain regions associated with the limbic system. Catalyzes the sulfate conjugation of dopamine. Catalyzes the sulfation of T4 (L-thyroxine/3,5,3',5'-tetraiodothyronine), T3 (3,5,3'-triiodothyronine), rT3 (3,3',5'-triiodothyronine) and 3,3'-T2 (3,3'-diiodothyronine), with a substrate preference of 3,3'-T2 &gt; rT3 &gt; T3 &gt; T4. The protein is Sulfotransferase 1A1 (SULT1A1) of Canis lupus familiaris (Dog).